An 804-amino-acid polypeptide reads, in one-letter code: Serine/threonine-protein kinase ATG1 (804 aa).

The Protein kinase domain occupies 12–308 (FTIGPEIGRG…FQEFFNDPLI (297 aa)). ATP contacts are provided by residues 18-26 (IGRGSFANV) and lysine 41. The Proton acceptor role is filled by aspartate 158. Disordered stretches follow at residues 339–364 (TSPP…ERAP), 395–415 (INKS…KGAR), and 455–506 (PSPH…MPIS). Residues 404–415 (TVKDGQIKKGAR) are compositionally biased toward basic and acidic residues. The segment covering 462–495 (NEHSAANPSGPTETQTQRRFSPSSRTSSIGSNRR) has biased composition (polar residues).

This sequence belongs to the protein kinase superfamily. Ser/Thr protein kinase family. APG1/unc-51/ULK1 subfamily. In terms of assembly, homodimer. Forms a ternary complex with ATG13 and ATG17.

It is found in the cytoplasm. It localises to the preautophagosomal structure membrane. The enzyme catalyses L-seryl-[protein] + ATP = O-phospho-L-seryl-[protein] + ADP + H(+). It catalyses the reaction L-threonyl-[protein] + ATP = O-phospho-L-threonyl-[protein] + ADP + H(+). Its function is as follows. Serine/threonine protein kinase involved in the cytoplasm to vacuole transport (Cvt) and found to be essential in autophagy, where it is required for the formation of autophagosomes. Involved in the clearance of protein aggregates which cannot be efficiently cleared by the proteasome. Required for selective autophagic degradation of the nucleus (nucleophagy) as well as for mitophagy which contributes to regulate mitochondrial quantity and quality by eliminating the mitochondria to a basal level to fulfill cellular energy requirements and preventing excess ROS production. Also involved in endoplasmic reticulum-specific autophagic process, in selective removal of ER-associated degradation (ERAD) substrates. Plays a key role in ATG9 and ATG23 cycling through the pre-autophagosomal structure and is necessary to promote ATG18 binding to ATG9 through phosphorylation of ATG9. Catalyzes phosphorylation of ATG4, decreasing the interaction between ATG4 and ATG8 and impairing deconjugation of PE-conjugated forms of ATG8. The sequence is that of Serine/threonine-protein kinase ATG1 from Pichia angusta (Yeast).